Here is a 71-residue protein sequence, read N- to C-terminus: Natterin-P (71 aa).

The N-terminal stretch at 1–18 is a signal peptide; that stretch reads MKLLVLLVTLLVLSWTSA. Residues 19–45 constitute a propeptide that is removed on maturation; it reads EDLGDQEILENNEDNNHESELGEPAAQ. The segment covering 22 to 31 has biased composition (acidic residues); sequence GDQEILENNE. Residues 22–54 are disordered; sequence GDQEILENNEDNNHESELGEPAAQHTDDETSQL. Cysteines 62 and 71 form a disulfide.

This sequence belongs to the natterin family. In terms of tissue distribution, expressed by the venom gland.

The protein resides in the secreted. Inhibited by tissue-kallikrein inhibitor TKI and trasylol. Plasma kallikrein inhibitor PKSI527 and classical inhibitors of serine-, metallo-, thiol- or aspartate-peptidases evokes a minor inhibition of the peptide digestion. Functionally, shows nociceptive, edema-inducing and kininogenase activity with release of kallidin from low molecular weight kininogen. The cleavage occurs at Met-Lys bonds. In Thalassophryne nattereri (Copper Joe toadfish), this protein is Natterin-P.